The chain runs to 524 residues: GMP synthase [glutamine-hydrolyzing] (524 aa).

The Glutamine amidotransferase type-1 domain maps to 9–207 (RILILDFGSQ…VIHICQCIPN (199 aa)). Cys86 functions as the Nucleophile in the catalytic mechanism. Active-site residues include His181 and Glu183. The GMPS ATP-PPase domain maps to 208 to 399 (WTTKHIIEDS…LGLPADLIYR (192 aa)). ATP is bound at residue 235-241 (SGGVDSA).

In terms of assembly, homodimer.

It carries out the reaction XMP + L-glutamine + ATP + H2O = GMP + L-glutamate + AMP + diphosphate + 2 H(+). The protein operates within purine metabolism; GMP biosynthesis; GMP from XMP (L-Gln route): step 1/1. Functionally, catalyzes the synthesis of GMP from XMP. The polypeptide is GMP synthase [glutamine-hydrolyzing] (Coxiella burnetii (strain CbuK_Q154) (Coxiella burnetii (strain Q154))).